The primary structure comprises 2609 residues: Mycosubtilin synthase subunit C (2609 aa).

Residues 258–1628 (PREKTIHQLF…RVCAQPEMTV (1371 aa)) form a domain 1 (D-serine-activating) region. Residues 288-695 (TYQELNEKAN…HIPSIQESIV (408 aa)) are adenylation 1. The 75-residue stretch at 771-845 (APRTELEKIL…ELVPYVEPVT (75 aa)) folds into the Carrier 1 domain. Ser806 is modified (O-(pantetheine 4'-phosphoryl)serine). Positions 853-1312 (IKGPALLTPI…EISIDELDQF (460 aa)) are epimerization 1. Positions 1322-1623 (IENIYPLTPM…NTIPVRVCAQ (302 aa)) are condensation 1. The domain 2 (isoleucine-activating) stretch occupies residues 1778–2359 (PKEKTIYQLF…AHAIQAAALP (582 aa)). Residues 1808-2205 (TYRQLNEQAN…LVESVKEAVV (398 aa)) are adenylation 2. The Carrier 2 domain occupies 2282 to 2357 (APRTLIEKQL…TMAHAIQAAA (76 aa)). Residue Ser2317 is modified to O-(pantetheine 4'-phosphoryl)serine. A thioesterase region spans residues 2375–2581 (IPVFCFPPLI…ENMSTIRSIM (207 aa)).

The protein belongs to the ATP-dependent AMP-binding enzyme family. The cofactor is pantetheine 4'-phosphate.

In terms of biological role, this protein is a multifunctional enzyme, able to activate and polymerize the amino acids Ser and Asn as part of the synthesis of mycosubtilin. The Ser residue is further epimerized to the D-isomer form. The activation sites for these amino acids consist of individual domains. This Bacillus subtilis protein is Mycosubtilin synthase subunit C (mycC).